The chain runs to 415 residues: Gamma-glutamyl phosphate reductase (415 aa).

Belongs to the gamma-glutamyl phosphate reductase family.

The protein resides in the cytoplasm. The catalysed reaction is L-glutamate 5-semialdehyde + phosphate + NADP(+) = L-glutamyl 5-phosphate + NADPH + H(+). It functions in the pathway amino-acid biosynthesis; L-proline biosynthesis; L-glutamate 5-semialdehyde from L-glutamate: step 2/2. In terms of biological role, catalyzes the NADPH-dependent reduction of L-glutamate 5-phosphate into L-glutamate 5-semialdehyde and phosphate. The product spontaneously undergoes cyclization to form 1-pyrroline-5-carboxylate. In Parabacteroides distasonis (strain ATCC 8503 / DSM 20701 / CIP 104284 / JCM 5825 / NCTC 11152), this protein is Gamma-glutamyl phosphate reductase.